The following is a 317-amino-acid chain: Malate dehydrogenase (317 aa).

Residues Gly7–Gly13 and Asp34 each bind NAD(+). Substrate is bound by residues Arg81 and Arg87. NAD(+)-binding positions include Asn94 and Val117–Asn119. Substrate contacts are provided by Asn119 and Arg153. His177 functions as the Proton acceptor in the catalytic mechanism. Met231 is a binding site for NAD(+).

Belongs to the LDH/MDH superfamily. MDH type 1 family. Homodimer.

The catalysed reaction is (S)-malate + NAD(+) = oxaloacetate + NADH + H(+). Its function is as follows. Catalyzes the reversible oxidation of malate to oxaloacetate. The chain is Malate dehydrogenase from Actinobacillus pleuropneumoniae serotype 7 (strain AP76).